Reading from the N-terminus, the 67-residue chain is uncharacterized protein (67 aa).

This is an uncharacterized protein from Acidianus filamentous virus 2 (isolate Italy/Pozzuoli) (AFV-2).